We begin with the raw amino-acid sequence, 334 residues long: Nucleoid-associated protein PMI0825 (334 aa).

Belongs to the YejK family.

It localises to the cytoplasm. The protein localises to the nucleoid. This is Nucleoid-associated protein PMI0825 from Proteus mirabilis (strain HI4320).